Consider the following 129-residue polypeptide: Large ribosomal subunit protein bL12c (129 aa).

Belongs to the bacterial ribosomal protein bL12 family. Homodimer. Part of the ribosomal stalk of the 50S ribosomal subunit. Forms a multimeric L10(L12)X complex, where L10 forms an elongated spine to which 2 to 4 L12 dimers bind in a sequential fashion. Binds GTP-bound translation factors.

It localises to the plastid. It is found in the chloroplast. Its function is as follows. Forms part of the ribosomal stalk which helps the ribosome interact with GTP-bound translation factors. Is thus essential for accurate translation. The polypeptide is Large ribosomal subunit protein bL12c (Porphyra purpurea (Red seaweed)).